The sequence spans 126 residues: uncharacterized protein (126 aa).

The next 2 membrane-spanning stretches (helical) occupy residues 21–43 (LIVW…RIFS) and 48–70 (SVTF…LLLL).

It is found in the membrane. This is an uncharacterized protein from Saccharomyces cerevisiae (strain ATCC 204508 / S288c) (Baker's yeast).